A 331-amino-acid chain; its full sequence is ADP-L-glycero-D-manno-heptose-6-epimerase (331 aa).

NADP(+) contacts are provided by residues 11–12 (FI), 32–33 (DN), K39, K54, 75–79 (EGACS), and N92. Y139 functions as the Proton acceptor in the catalytic mechanism. K143 is a binding site for NADP(+). N168 is a binding site for substrate. Residues V169 and K177 each coordinate NADP(+). K177 acts as the Proton acceptor in catalysis. Residues R179, H186, 200–203 (FGEY), R213, and Y292 each bind substrate.

It belongs to the NAD(P)-dependent epimerase/dehydratase family. HldD subfamily. As to quaternary structure, homopentamer. NADP(+) serves as cofactor.

It catalyses the reaction ADP-D-glycero-beta-D-manno-heptose = ADP-L-glycero-beta-D-manno-heptose. The protein operates within nucleotide-sugar biosynthesis; ADP-L-glycero-beta-D-manno-heptose biosynthesis; ADP-L-glycero-beta-D-manno-heptose from D-glycero-beta-D-manno-heptose 7-phosphate: step 4/4. Functionally, catalyzes the interconversion between ADP-D-glycero-beta-D-manno-heptose and ADP-L-glycero-beta-D-manno-heptose via an epimerization at carbon 6 of the heptose. This Cupriavidus necator (strain ATCC 17699 / DSM 428 / KCTC 22496 / NCIMB 10442 / H16 / Stanier 337) (Ralstonia eutropha) protein is ADP-L-glycero-D-manno-heptose-6-epimerase.